Reading from the N-terminus, the 126-residue chain is Large ribosomal subunit protein bL19 (126 aa).

It belongs to the bacterial ribosomal protein bL19 family.

This protein is located at the 30S-50S ribosomal subunit interface and may play a role in the structure and function of the aminoacyl-tRNA binding site. This chain is Large ribosomal subunit protein bL19, found in Dechloromonas aromatica (strain RCB).